The following is a 963-amino-acid chain: VPS35 endosomal protein-sorting factor-like (963 aa).

A disordered region spans residues 43–69 (SKTKKVNRKGSTSSTSSSSSSSVVDPL). The segment covering 53–69 (STSSTSSSSSSSVVDPL) has biased composition (low complexity). Ser265 is modified (phosphoserine). Residues 703-719 (ACVAYCFITIPSLAGIF) traverse the membrane as a helical segment.

The protein belongs to the VPS35L family. In terms of assembly, component of the heterotrimeric retriever complex formed by VPS26C, VPS29 and VPS35L. Interacts with VPS29. Interacts with COMMD1, CCDC93 and CCDC22; associates with the CCC (COMMD/CCDC22/CCDC93) complex which contains at least COMMD1 (and possibly other COMM domain-containing proteins), CCDC22 and CCDC93. Interacts with WASHC1, WASHC2A and WASHC2C. Interacts with SNX17 and SNX31.

The protein localises to the membrane. It is found in the endosome. Its function is as follows. Acts as a component of the retriever complex. The retriever complex is a heterotrimeric complex related to retromer cargo-selective complex (CSC) and essential for retromer-independent retrieval and recycling of numerous cargos such as integrin alpha-5/beta-1 (ITGA5:ITGB1). The recruitment of the retriever complex to the endosomal membrane involves CCC and WASH complexes. In the endosomes, drives the retrieval and recycling of NxxY-motif-containing cargo proteins by coupling to SNX17, a cargo essential for the homeostatic maintenance of numerous cell surface proteins associated with processes that include cell migration, cell adhesion, nutrient supply and cell signaling. Involved in copper-dependent ATP7A trafficking between the trans-Golgi network and vesicles in the cell periphery; the function is proposed to depend on its association with the CCC complex and cooperation with the WASH complex on early endosomes. Seems not to be required for CCC complex stability. In terms of biological role, (Microbial infection) The heterotrimeric retriever complex, in collaboration with the CCC complex, mediates the exit of human papillomavirus to the cell surface. This chain is VPS35 endosomal protein-sorting factor-like, found in Homo sapiens (Human).